Reading from the N-terminus, the 90-residue chain is Small ribosomal subunit protein bS18A (90 aa).

The protein belongs to the bacterial ribosomal protein bS18 family. As to quaternary structure, part of the 30S ribosomal subunit. Forms a tight heterodimer with protein bS6.

In terms of biological role, binds as a heterodimer with protein bS6 to the central domain of the 16S rRNA, where it helps stabilize the platform of the 30S subunit. The chain is Small ribosomal subunit protein bS18A from Roseiflexus castenholzii (strain DSM 13941 / HLO8).